The following is a 391-amino-acid chain: Tyrosine recombinase XerC-like (391 aa).

Positions 64–148 (VTLGDLMHTW…FLKTFFNYAV (85 aa)) constitute a Core-binding (CB) domain. One can recognise a Tyr recombinase domain in the interval 175–384 (TEIETFSDEE…IPKQKTNAVE (210 aa)). Residues arginine 210, lysine 244, histidine 335, arginine 338, and histidine 361 contribute to the active site. The O-(3'-phospho-DNA)-tyrosine intermediate role is filled by tyrosine 371.

This sequence belongs to the 'phage' integrase family.

Its subcellular location is the cytoplasm. In terms of biological role, site-specific tyrosine recombinase, which acts by catalyzing the cutting and rejoining of the recombining DNA molecules. This chain is Tyrosine recombinase XerC-like, found in Caldanaerobacter subterraneus subsp. tengcongensis (strain DSM 15242 / JCM 11007 / NBRC 100824 / MB4) (Thermoanaerobacter tengcongensis).